The primary structure comprises 578 residues: Proline--tRNA ligase (578 aa).

It belongs to the class-II aminoacyl-tRNA synthetase family. ProS type 1 subfamily. In terms of assembly, homodimer.

The protein resides in the cytoplasm. It carries out the reaction tRNA(Pro) + L-proline + ATP = L-prolyl-tRNA(Pro) + AMP + diphosphate. Functionally, catalyzes the attachment of proline to tRNA(Pro) in a two-step reaction: proline is first activated by ATP to form Pro-AMP and then transferred to the acceptor end of tRNA(Pro). As ProRS can inadvertently accommodate and process non-cognate amino acids such as alanine and cysteine, to avoid such errors it has two additional distinct editing activities against alanine. One activity is designated as 'pretransfer' editing and involves the tRNA(Pro)-independent hydrolysis of activated Ala-AMP. The other activity is designated 'posttransfer' editing and involves deacylation of mischarged Ala-tRNA(Pro). The misacylated Cys-tRNA(Pro) is not edited by ProRS. In Burkholderia thailandensis (strain ATCC 700388 / DSM 13276 / CCUG 48851 / CIP 106301 / E264), this protein is Proline--tRNA ligase.